Reading from the N-terminus, the 59-residue chain is UPF0434 protein plu1633 (59 aa).

It belongs to the UPF0434 family.

This is UPF0434 protein plu1633 from Photorhabdus laumondii subsp. laumondii (strain DSM 15139 / CIP 105565 / TT01) (Photorhabdus luminescens subsp. laumondii).